The primary structure comprises 377 residues: Lactosylceramide 1,3-N-acetyl-beta-D-glucosaminyltransferase B (377 aa).

Residues M1–S13 are Cytoplasmic-facing. Residues L14–V30 traverse the membrane as a helical; Signal-anchor for type II membrane protein segment. The Lumenal segment spans residues Q31–S377. N56, N167, and N275 each carry an N-linked (GlcNAc...) asparagine glycan.

The protein belongs to the glycosyltransferase 31 family.

The protein resides in the golgi apparatus membrane. The catalysed reaction is a beta-D-Gal-(1-&gt;4)-beta-D-Glc-(1&lt;-&gt;1)-Cer(d18:1(4E)) + UDP-N-acetyl-alpha-D-glucosamine = a beta-D-GlcNAc-(1-&gt;3)-beta-D-Gal-(1-&gt;4)-beta-D-Glc-(1&lt;-&gt;1)-Cer(d18:1(4E)) + UDP + H(+). It catalyses the reaction a neolactoside nLc4Cer(d18:1(4E)) + UDP-N-acetyl-alpha-D-glucosamine = a neolactoside IV(3)-beta-GlcNAc-nLc4Cer(d18:1(4E)) + UDP + H(+). The protein operates within protein modification; protein glycosylation. Functionally, beta-1,3-N-acetylglucosaminyltransferase that plays a key role in the synthesis of lacto- or neolacto-series carbohydrate chains on glycolipids. In Xenopus laevis (African clawed frog), this protein is Lactosylceramide 1,3-N-acetyl-beta-D-glucosaminyltransferase B (b3gnt5-b).